Reading from the N-terminus, the 556-residue chain is Peptide chain release factor 3 (556 aa).

The tr-type G domain occupies 28–297; sequence QQRRNFAIIS…AFLDYALKPG (270 aa). GTP is bound by residues 37 to 44, 105 to 109, and 159 to 162; these read SHPDAGKT, DTPGH, and NKMD.

This sequence belongs to the TRAFAC class translation factor GTPase superfamily. Classic translation factor GTPase family. PrfC subfamily.

It is found in the cytoplasm. In terms of biological role, increases the formation of ribosomal termination complexes and stimulates activities of RF-1 and RF-2. It binds guanine nucleotides and has strong preference for UGA stop codons. It may interact directly with the ribosome. The stimulation of RF-1 and RF-2 is significantly reduced by GTP and GDP, but not by GMP. The protein is Peptide chain release factor 3 of Synechococcus sp. (strain ATCC 27144 / PCC 6301 / SAUG 1402/1) (Anacystis nidulans).